The chain runs to 127 residues: MAIVGLGTDIVEIERITAHVARSGDKLAKRVLTEAEFEIYQQHSQPSRYLAKRFAAKEAAAKALGTGIGRGVSFQHIHIGNTPDGAPTIDFTQGAQQRLALLNGVVGHISIADEKSYAIATVILESR.

Residues aspartate 9 and glutamate 58 each coordinate Mg(2+).

This sequence belongs to the P-Pant transferase superfamily. AcpS family. Requires Mg(2+) as cofactor.

It is found in the cytoplasm. It catalyses the reaction apo-[ACP] + CoA = holo-[ACP] + adenosine 3',5'-bisphosphate + H(+). Its function is as follows. Transfers the 4'-phosphopantetheine moiety from coenzyme A to a Ser of acyl-carrier-protein. This is Holo-[acyl-carrier-protein] synthase from Shewanella sp. (strain MR-7).